Consider the following 370-residue polypeptide: Protein rough sheath 2 (370 aa).

HTH myb-type domains follow at residues 1–53 (MKER…KNYL) and 54–108 (RPGI…EKQQ). DNA-binding regions (H-T-H motif) lie at residues 27–53 (WHLV…KNYL) and 81–104 (WKKI…EVFK). Positions 107–129 (QQRELRDSRRPPPEPSPDERGRY) are disordered. Residues 276-340 (KRVEQQLEME…QVKEEKMAEQ (65 aa)) adopt a coiled-coil conformation.

Homodimer. Interacts with AS2, WRKY1, HIRA, a probable histone chaperone, and RIK, a predicted RNA binding protein. As to expression, expressed in lateral organ promordia.

Its subcellular location is the nucleus. Functionally, transcription factor required for normal cell differentiation. Interacts directly with asymmetric leaves 2 (AS2) to repress the knox homeobox genes. The protein is Protein rough sheath 2 (RS2) of Zea mays (Maize).